The chain runs to 442 residues: UDP-N-acetylmuramoylalanine--D-glutamate ligase (442 aa).

This sequence belongs to the MurCDEF family.

The protein resides in the cytoplasm. It catalyses the reaction UDP-N-acetyl-alpha-D-muramoyl-L-alanine + D-glutamate + ATP = UDP-N-acetyl-alpha-D-muramoyl-L-alanyl-D-glutamate + ADP + phosphate + H(+). Its pathway is cell wall biogenesis; peptidoglycan biosynthesis. In terms of biological role, cell wall formation. Catalyzes the addition of glutamate to the nucleotide precursor UDP-N-acetylmuramoyl-L-alanine (UMA). The chain is UDP-N-acetylmuramoylalanine--D-glutamate ligase from Buchnera aphidicola subsp. Baizongia pistaciae (strain Bp).